Consider the following 360-residue polypeptide: Photosystem II protein D1 3 (360 aa).

The next 3 helical transmembrane spans lie at 29–46, 118–133, and 142–156; these read YVGWFGVLMIPTLLTATI, HFLLGIFSYMGREWEL, and WIAVAYSAPVAAATA. Chlorophyll a is bound at residue H118. Position 126 (Y126) interacts with pheophytin a. [CaMn4O5] cluster-binding residues include D170 and E189. Residues 197–218 form a helical membrane-spanning segment; it reads FHMLGVAGVFGGALFSAMHGSL. H198 contacts chlorophyll a. A quinone is bound by residues H215 and 264 to 265; that span reads SF. H215 contributes to the Fe cation binding site. A Fe cation-binding site is contributed by H272. A helical membrane pass occupies residues 274–288; sequence FLAAWPVIGIWFASL. Positions 332, 333, 342, and 344 each coordinate [CaMn4O5] cluster. Positions 345–360 are excised as a propeptide; it reads AGDQAPVALQAPAING.

The protein belongs to the reaction center PufL/M/PsbA/D family. PSII is composed of 1 copy each of membrane proteins PsbA, PsbB, PsbC, PsbD, PsbE, PsbF, PsbH, PsbI, PsbJ, PsbK, PsbL, PsbM, PsbT, PsbX, PsbY, PsbZ, Psb30/Ycf12, peripheral proteins PsbO, CyanoQ (PsbQ), PsbU, PsbV and a large number of cofactors. It forms dimeric complexes. It depends on The D1/D2 heterodimer binds P680, chlorophylls that are the primary electron donor of PSII, and subsequent electron acceptors. It shares a non-heme iron and each subunit binds pheophytin, quinone, additional chlorophylls, carotenoids and lipids. D1 provides most of the ligands for the Mn4-Ca-O5 cluster of the oxygen-evolving complex (OEC). There is also a Cl(-1) ion associated with D1 and D2, which is required for oxygen evolution. The PSII complex binds additional chlorophylls, carotenoids and specific lipids. as a cofactor. Tyr-161 forms a radical intermediate that is referred to as redox-active TyrZ, YZ or Y-Z. Post-translationally, C-terminally processed by CtpA; processing is essential to allow assembly of the oxygen-evolving complex and thus photosynthetic growth.

The protein localises to the cellular thylakoid membrane. It carries out the reaction 2 a plastoquinone + 4 hnu + 2 H2O = 2 a plastoquinol + O2. Functionally, photosystem II (PSII) is a light-driven water:plastoquinone oxidoreductase that uses light energy to abstract electrons from H(2)O, generating O(2) and a proton gradient subsequently used for ATP formation. It consists of a core antenna complex that captures photons, and an electron transfer chain that converts photonic excitation into a charge separation. The D1/D2 (PsbA/PsbD) reaction center heterodimer binds P680, the primary electron donor of PSII as well as several subsequent electron acceptors. The polypeptide is Photosystem II protein D1 3 (Picosynechococcus sp. (strain ATCC 27264 / PCC 7002 / PR-6) (Agmenellum quadruplicatum)).